Consider the following 376-residue polypeptide: Chaperone protein DnaJ (376 aa).

One can recognise a J domain in the interval 5–70 (DFYDVLGVSK…EKKQNYDNFG (66 aa)). The CR-type zinc-finger motif lies at 137 to 215 (GKKQDIKFST…CNGQGNKQAS (79 aa)). Positions 150, 153, 167, 170, 189, 192, 203, and 206 each coordinate Zn(2+). CXXCXGXG motif repeat units follow at residues 150–157 (CNTCNGNG), 167–174 (CTVCGGNG), 189–196 (CPQCAGSG), and 203–210 (CTDCNGQG).

Belongs to the DnaJ family. Homodimer. It depends on Zn(2+) as a cofactor.

The protein resides in the cytoplasm. Its function is as follows. Participates actively in the response to hyperosmotic and heat shock by preventing the aggregation of stress-denatured proteins and by disaggregating proteins, also in an autonomous, DnaK-independent fashion. Unfolded proteins bind initially to DnaJ; upon interaction with the DnaJ-bound protein, DnaK hydrolyzes its bound ATP, resulting in the formation of a stable complex. GrpE releases ADP from DnaK; ATP binding to DnaK triggers the release of the substrate protein, thus completing the reaction cycle. Several rounds of ATP-dependent interactions between DnaJ, DnaK and GrpE are required for fully efficient folding. Also involved, together with DnaK and GrpE, in the DNA replication of plasmids through activation of initiation proteins. This chain is Chaperone protein DnaJ, found in Pelagibacter ubique (strain HTCC1062).